The sequence spans 1235 residues: Major DNA-binding protein (1235 aa).

Residues 536–584 (GGLDGKGDDGVPGGGAGGGGGRDVSGGPSDGLGGGRGGGGGGDSGGMMG) form a disordered region. Residues 545–584 (GVPGGGAGGGGGRDVSGGPSDGLGGGRGGGGGGDSGGMMG) are compositionally biased toward gly residues. The short motif at 846–847 (FW) is the Required for filament formation element. Residues 1214-1226 (GVGGSSGGGGGSG) show a composition bias toward gly residues. The disordered stretch occupies residues 1214-1235 (GVGGSSGGGGGSGLLPAKRSRL). Positions 1232–1235 (RSRL) are required for nuclear localization.

The protein belongs to the herpesviridae major DNA-binding protein family. Homooligomers. Forms double-helical filaments necessary for the formation of replication compartments within the host nucleus. Interacts with the origin-binding protein. Interacts with the helicase primase complex; this interaction stimulates primer synthesis activity of the helicase-primase complex. Interacts with the DNA polymerase. Interacts with the alkaline exonuclease; this interaction increases its nuclease processivity.

It localises to the host nucleus. In terms of biological role, plays several crucial roles in viral infection. Participates in the opening of the viral DNA origin to initiate replication by interacting with the origin-binding protein. May disrupt loops, hairpins and other secondary structures present on ssDNA to reduce and eliminate pausing of viral DNA polymerase at specific sites during elongation. Promotes viral DNA recombination by performing strand-transfer, characterized by the ability to transfer a DNA strand from a linear duplex to a complementary single-stranded DNA circle. Can also catalyze the renaturation of complementary single strands. Additionally, reorganizes the host cell nucleus, leading to the formation of prereplicative sites and replication compartments. This process is driven by the protein which can form double-helical filaments in the absence of DNA. In Homo sapiens (Human), this protein is Major DNA-binding protein.